Here is a 169-residue protein sequence, read N- to C-terminus: Cell division inhibitor SulA (169 aa).

Residues 1-15 (MFTSAHANRSAQASA) show a composition bias toward polar residues. Residues 1–22 (MFTSAHANRSAQASASAGHYAH) form a disordered region. Residues 106 to 112 (ALRTGNY) are ftsZ binding. The lon protease binding stretch occupies residues 162–169 (KIHSNLYH).

Belongs to the SulA family. As to quaternary structure, interacts with FtsZ. In terms of processing, is rapidly cleaved and degraded by the Lon protease once DNA damage is repaired.

Its function is as follows. Component of the SOS system and an inhibitor of cell division. Accumulation of SulA causes rapid cessation of cell division and the appearance of long, non-septate filaments. In the presence of GTP, binds a polymerization-competent form of FtsZ in a 1:1 ratio, thus inhibiting FtsZ polymerization and therefore preventing it from participating in the assembly of the Z ring. This mechanism prevents the premature segregation of damaged DNA to daughter cells during cell division. The sequence is that of Cell division inhibitor SulA from Klebsiella pneumoniae (strain 342).